We begin with the raw amino-acid sequence, 758 residues long: Aspartyl/asparaginyl beta-hydroxylase (758 aa).

The disordered stretch occupies residues 1-46 (MAQRKNAKSSGNSSSSGSGSGSTSAGSSSPGARRETKHGGHKNGRK). The Cytoplasmic portion of the chain corresponds to 1–53 (MAQRKNAKSSGNSSSSGSGSGSTSAGSSSPGARRETKHGGHKNGRKGGLSGTS). Low complexity predominate over residues 9–31 (SSGNSSSSGSGSGSTSAGSSSPG). A Phosphoserine modification is found at serine 14. A helical; Signal-anchor for type II membrane protein transmembrane segment spans residues 54–74 (FFTWFMVIALLGVWTSVAVVW). The N-linked (GlcNAc...) asparagine glycan is linked to leucine 64. The Lumenal portion of the chain corresponds to 75 to 758 (FDLVDYEEVL…PQQRRSLPAI (684 aa)). Aspartate 91, aspartate 93, aspartate 95, aspartate 97, and aspartate 102 together coordinate Ca(2+). Disordered stretches follow at residues 111-140 (ERST…EAEP) and 304-324 (EEQQ…EQKA). Residues 313–324 (TNRKTDDPEQKA) are compositionally biased toward basic and acidic residues. The stretch at 341–374 (IKAELDAAEKLRKRGKIEEAVNAFKELVRKYPQS) is one TPR 1 repeat. Asparagine 452 is a glycosylation site (N-linked (GlcNAc...) asparagine). 3 TPR repeats span residues 454–487 (TSLK…TPND), 489–521 (FAKV…GDPG), and 525–557 (GRFY…GHFA). Position 625 (tryptophan 625) interacts with 2-oxoglutarate. An intrachain disulfide couples cysteine 641 to cysteine 648. Residue serine 668 participates in 2-oxoglutarate binding. Histidine 679 serves as a coordination point for Fe cation. Position 688 to 690 (688 to 690 (RMH)) interacts with 2-oxoglutarate. Asparagine 706 is a glycosylation site (N-linked (GlcNAc...) asparagine). Histidine 725 provides a ligand contact to Fe cation. Arginine 735 lines the 2-oxoglutarate pocket.

It belongs to the aspartyl/asparaginyl beta-hydroxylase family. In terms of assembly, monomer. Isoform 8 interacts with ORAI1 and STIM1. Isoform 4 interacts with CASQ2. Fe cation is required as a cofactor. As to expression, isoform 1 is detected in all tissues tested. Isoform 8 is mainly expressed in pancreas, heart, brain, kidney and liver. Isoform 8 is expressed in kidney (at protein level).

The protein localises to the endoplasmic reticulum membrane. It localises to the sarcoplasmic reticulum membrane. The enzyme catalyses L-aspartyl-[protein] + 2-oxoglutarate + O2 = 3-hydroxy-L-aspartyl-[protein] + succinate + CO2. Its function is as follows. Specifically hydroxylates an Asp or Asn residue in certain epidermal growth factor-like (EGF) domains of a number of proteins. Functionally, membrane-bound Ca(2+)-sensing protein, which is a structural component of the ER-plasma membrane junctions. Isoform 8 regulates the activity of Ca(+2) released-activated Ca(+2) (CRAC) channels in T-cells. This is Aspartyl/asparaginyl beta-hydroxylase (ASPH) from Homo sapiens (Human).